The chain runs to 199 residues: Acireductone dioxygenase 3 (199 aa).

Histidine 99, histidine 101, glutamate 105, and histidine 144 together coordinate Fe(2+). Ni(2+)-binding residues include histidine 99, histidine 101, glutamate 105, and histidine 144.

The protein belongs to the acireductone dioxygenase (ARD) family. Requires Fe(2+) as cofactor. It depends on Ni(2+) as a cofactor.

The protein localises to the cytoplasm. It is found in the nucleus. The catalysed reaction is 1,2-dihydroxy-5-(methylsulfanyl)pent-1-en-3-one + O2 = 4-methylsulfanyl-2-oxobutanoate + formate + 2 H(+). It catalyses the reaction 1,2-dihydroxy-5-(methylsulfanyl)pent-1-en-3-one + O2 = 3-(methylsulfanyl)propanoate + CO + formate + 2 H(+). It functions in the pathway amino-acid biosynthesis; L-methionine biosynthesis via salvage pathway; L-methionine from S-methyl-5-thio-alpha-D-ribose 1-phosphate: step 5/6. In terms of biological role, catalyzes 2 different reactions between oxygen and the acireductone 1,2-dihydroxy-3-keto-5-methylthiopentene (DHK-MTPene) depending upon the metal bound in the active site. Fe-containing acireductone dioxygenase (Fe-ARD) produces formate and 2-keto-4-methylthiobutyrate (KMTB), the alpha-ketoacid precursor of methionine in the methionine recycle pathway. Ni-containing acireductone dioxygenase (Ni-ARD) produces methylthiopropionate, carbon monoxide and formate, and does not lie on the methionine recycle pathway. The protein is Acireductone dioxygenase 3 (ARD3) of Arabidopsis thaliana (Mouse-ear cress).